The chain runs to 412 residues: CinA-like protein (412 aa).

The protein belongs to the CinA family.

The polypeptide is CinA-like protein (Salinibacter ruber (strain DSM 13855 / M31)).